Consider the following 215-residue polypeptide: Pyridoxine/pyridoxamine 5'-phosphate oxidase (215 aa).

Residues 11–14 (RRDY) and lysine 69 contribute to the substrate site. Residues 64-69 (RVVLLK), 79-80 (YT), lysine 86, and glutamine 108 contribute to the FMN site. Positions 126, 130, and 134 each coordinate substrate. FMN-binding positions include 143–144 (QS) and tryptophan 188. 194–196 (RLH) lines the substrate pocket. Arginine 198 is a binding site for FMN.

Belongs to the pyridoxamine 5'-phosphate oxidase family. In terms of assembly, homodimer. The cofactor is FMN.

The enzyme catalyses pyridoxamine 5'-phosphate + O2 + H2O = pyridoxal 5'-phosphate + H2O2 + NH4(+). It carries out the reaction pyridoxine 5'-phosphate + O2 = pyridoxal 5'-phosphate + H2O2. The protein operates within cofactor metabolism; pyridoxal 5'-phosphate salvage; pyridoxal 5'-phosphate from pyridoxamine 5'-phosphate: step 1/1. It functions in the pathway cofactor metabolism; pyridoxal 5'-phosphate salvage; pyridoxal 5'-phosphate from pyridoxine 5'-phosphate: step 1/1. In terms of biological role, catalyzes the oxidation of either pyridoxine 5'-phosphate (PNP) or pyridoxamine 5'-phosphate (PMP) into pyridoxal 5'-phosphate (PLP). This chain is Pyridoxine/pyridoxamine 5'-phosphate oxidase, found in Legionella pneumophila (strain Paris).